The following is an 82-amino-acid chain: Protein CYSTEINE-RICH TRANSMEMBRANE MODULE 13 (82 aa).

The interval 1–58 is disordered; that stretch reads MYHQEQHPVGAPPPQGYPPKDGYPPAGYPPAGYPPPGYAQGYPAQGYPPPQYSQAPQQ. The span at 26–37 shows a compositional bias: pro residues; that stretch reads AGYPPAGYPPPG. A helical membrane pass occupies residues 59 to 76; it reads KQNAGMLEGCLAALCCCC.

Belongs to the CYSTM1 family. As to quaternary structure, homodimer and heterodimers. Interacts with CYSTM7, CYTSM3, CYTSM4, CYTSM5, CYTSM6, CYTSM9, CYTSM10 and CYTSM11. Binds weakly to CYSTM1 and CYSTM2. In terms of tissue distribution, expressed in root meristem, root vasculature, leaf vasculature and floral organ primordia. Mostly expressed in roots and flowers and, to a lower extent, in stems, siliques and leaves.

It localises to the cell membrane. Required for the promotion of megasporogenesis, or promotion of germ cell formation from somatic precursor cells. Acts redundantly with WIH2. Functions in a genetic pathway downstream of SPL/NZZ and WUS and together with TRN2 in promoting megasporogenesis. Involved in resistance to abiotic stress. The chain is Protein CYSTEINE-RICH TRANSMEMBRANE MODULE 13 from Arabidopsis thaliana (Mouse-ear cress).